The sequence spans 239 residues: Large ribosomal subunit protein uL2 (239 aa).

It belongs to the universal ribosomal protein uL2 family.

It localises to the cytoplasm. The chain is Large ribosomal subunit protein uL2 (RPL8) from Encephalitozoon cuniculi (strain GB-M1) (Microsporidian parasite).